A 229-amino-acid chain; its full sequence is Triosephosphate isomerase (229 aa).

16-18 (NFK) contacts substrate. Residue H100 is the Electrophile of the active site. E148 (proton acceptor) is an active-site residue. Substrate contacts are provided by residues I153, G188, and 209-210 (AS).

Belongs to the triosephosphate isomerase family. As to quaternary structure, homotetramer; dimer of dimers.

It localises to the cytoplasm. The enzyme catalyses D-glyceraldehyde 3-phosphate = dihydroxyacetone phosphate. It functions in the pathway carbohydrate biosynthesis; gluconeogenesis. It participates in carbohydrate degradation; glycolysis; D-glyceraldehyde 3-phosphate from glycerone phosphate: step 1/1. In terms of biological role, involved in the gluconeogenesis. Catalyzes stereospecifically the conversion of dihydroxyacetone phosphate (DHAP) to D-glyceraldehyde-3-phosphate (G3P). The polypeptide is Triosephosphate isomerase (Methanothermobacter thermautotrophicus (strain ATCC 29096 / DSM 1053 / JCM 10044 / NBRC 100330 / Delta H) (Methanobacterium thermoautotrophicum)).